The chain runs to 3075 residues: Laminin subunit alpha-1 (3075 aa).

The signal sequence occupies residues 1 to 17 (MRGGVLLVLLLCVAAQC). A Laminin N-terminal domain is found at 18-269 (RQRGLFPAIL…SIKDISVGGM (252 aa)). Intrachain disulfides connect cysteine 270–cysteine 279, cysteine 272–cysteine 290, cysteine 292–cysteine 301, cysteine 304–cysteine 324, cysteine 327–cysteine 336, cysteine 329–cysteine 361, cysteine 364–cysteine 373, cysteine 376–cysteine 394, cysteine 397–cysteine 409, cysteine 399–cysteine 427, cysteine 429–cysteine 438, cysteine 441–cysteine 451, cysteine 454–cysteine 467, cysteine 456–cysteine 471, cysteine 473–cysteine 482, and cysteine 485–cysteine 500. 4 Laminin EGF-like domains span residues 270–326 (CICY…TCEA), 327–396 (CNCH…PCRP), 397–453 (CNCD…TCVS), and 454–502 (CGCN…GCSE). In terms of domain architecture, Laminin EGF-like 5; first part spans 503–512 (CFCFGVSDVC). The region spanning 516-708 (SWPVGQVNSM…DLVVAADVEH (193 aa)) is the Laminin IV type A 1 domain. Asparagine 665 carries N-linked (GlcNAc...) asparagine glycosylation. The 33-residue stretch at 709–741 (CECPQGYTGTSCESCLSGYYRVDGILFGGICQP) folds into the Laminin EGF-like 5; second part domain. Cystine bridges form between cysteine 742/cysteine 751, cysteine 744/cysteine 757, cysteine 760/cysteine 769, cysteine 772/cysteine 788, cysteine 791/cysteine 806, cysteine 793/cysteine 816, cysteine 819/cysteine 828, cysteine 831/cysteine 846, cysteine 849/cysteine 863, cysteine 851/cysteine 870, cysteine 873/cysteine 882, cysteine 885/cysteine 899, cysteine 902/cysteine 914, cysteine 904/cysteine 921, cysteine 923/cysteine 932, cysteine 935/cysteine 948, cysteine 951/cysteine 963, cysteine 953/cysteine 969, cysteine 971/cysteine 980, cysteine 983/cysteine 995, cysteine 998/cysteine 1007, cysteine 1000/cysteine 1014, cysteine 1016/cysteine 1025, cysteine 1028/cysteine 1041, cysteine 1044/cysteine 1056, cysteine 1046/cysteine 1063, cysteine 1065/cysteine 1074, cysteine 1077/cysteine 1087, cysteine 1090/cysteine 1102, cysteine 1092/cysteine 1118, cysteine 1120/cysteine 1129, and cysteine 1132/cysteine 1147. Laminin EGF-like domains are found at residues 742–790 (CECH…DCQP), 791–848 (CACP…SCVP), 849–901 (CDCS…NCRA), 902–950 (CECH…GCRP), 951–997 (CNCS…SCTP), 998–1043 (CDCP…GCQA), 1044–1089 (CNCS…DCVP), and 1090–1149 (CDCD…GCSP). The 10-residue stretch at 1150 to 1159 (CFCSGLSHLC) folds into the Laminin EGF-like 14; first part domain. Residues 1170-1361 (VTLGSDQPLL…EEEVASLLEN (192 aa)) form the Laminin IV type A 2 domain. The 41-residue stretch at 1362 to 1402 (CVCPPGTVGFSCQDCAPGYHRGKLPAGSDRGPRPLVAPCVP) folds into the Laminin EGF-like 14; second part domain. 12 disulfides stabilise this stretch: cysteine 1403-cysteine 1412, cysteine 1405-cysteine 1419, cysteine 1422-cysteine 1431, cysteine 1434-cysteine 1449, cysteine 1452-cysteine 1466, cysteine 1454-cysteine 1476, cysteine 1479-cysteine 1488, cysteine 1491-cysteine 1506, cysteine 1509-cysteine 1521, cysteine 1511-cysteine 1528, cysteine 1530-cysteine 1539, and cysteine 1542-cysteine 1553. Laminin EGF-like domains lie at 1403-1451 (CSCN…DCAL), 1452-1508 (CACP…SCQK), and 1509-1555 (CDCN…DCVS). The segment at 1556–2116 (CDDECVGVLL…SQARKQAASI (561 aa)) is domain II and I. Residues asparagine 1579, asparagine 1689, asparagine 1717, asparagine 2047, and asparagine 2243 are each glycosylated (N-linked (GlcNAc...) asparagine). Residues 1706 to 1783 (MQIRDFTQLH…KMQESNHLLL (78 aa)) adopt a coiled-coil conformation. Laminin G-like domains lie at 2117 to 2297 (KVAV…CRGC), 2305 to 2481 (DPSF…RKGC), 2486 to 2673 (IRSV…LDTC), 2713 to 2885 (AHQF…VNRC), and 2890 to 3070 (QEGT…LHSC). Intrachain disulfides connect cysteine 2271–cysteine 2297 and cysteine 2457–cysteine 2481. The Cell attachment site motif lies at 2534-2536 (RGD). 3 cysteine pairs are disulfide-bonded: cysteine 2646–cysteine 2673, cysteine 2860–cysteine 2885, and cysteine 3039–cysteine 3070.

In terms of assembly, laminin is a complex glycoprotein, consisting of three different polypeptide chains (alpha, beta, gamma), which are bound to each other by disulfide bonds into a cross-shaped molecule comprising one long and three short arms with globules at each end. Alpha-1 is a subunit of laminin-1 (laminin-111 or EHS laminin) and laminin-3 (laminin-121 or S-laminin). Tyrosine phosphorylated by PKDCC/VLK.

It is found in the secreted. The protein resides in the extracellular space. Its subcellular location is the extracellular matrix. The protein localises to the basement membrane. Its function is as follows. Binding to cells via a high affinity receptor, laminin is thought to mediate the attachment, migration and organization of cells into tissues during embryonic development by interacting with other extracellular matrix components. The sequence is that of Laminin subunit alpha-1 (LAMA1) from Homo sapiens (Human).